The chain runs to 602 residues: Adenylosuccinate synthetase (602 aa).

Residues 74 to 80 and 104 to 106 contribute to the GTP site; these read GDEGKGK and GHT. Catalysis depends on aspartate 75, which acts as the Proton acceptor. 2 residues coordinate Mg(2+): aspartate 75 and glycine 104. IMP contacts are provided by residues 75–78, 102–105, threonine 189, lysine 203, glutamine 315, threonine 331, and lysine 459; these read DEGK and NAGH. Histidine 105 functions as the Proton donor in the catalytic mechanism. 455–461 contacts substrate; the sequence is AVTKKPR. GTP contacts are provided by residues arginine 461 and 589-591; that span reads GNG.

Belongs to the adenylosuccinate synthetase family. In terms of assembly, homodimer. Requires Mg(2+) as cofactor.

It localises to the cytoplasm. The catalysed reaction is IMP + L-aspartate + GTP = N(6)-(1,2-dicarboxyethyl)-AMP + GDP + phosphate + 2 H(+). It participates in purine metabolism; AMP biosynthesis via de novo pathway; AMP from IMP: step 1/2. In terms of biological role, plays an important role in the salvage pathway for purine nucleotide biosynthesis. Catalyzes the first committed step in the biosynthesis of AMP from IMP. This Trypanosoma brucei gambiense (strain MHOM/CI/86/DAL972) protein is Adenylosuccinate synthetase.